The following is a 182-amino-acid chain: MASELDGLPVIATRREEAEGFLQGLVSKSLGWARKYSLFTYPFVTACCGMEYMTMASARYDSDRFGAAMPRFSPRQADLLMVVGTVNCKQAPILQRVYEQMADPKWVMAFGVCASSGGFYDNYATVQGIDRVIPVDVYVPGCPPRPEQVLDGIMLLQKKIQNQSHKLIDRKPLPVISGGAGR.

[4Fe-4S] cluster-binding residues include C47, C48, C113, and C142.

This sequence belongs to the complex I 20 kDa subunit family. NDH-1 is composed of 14 different subunits. Subunits NuoB, C, D, E, F, and G constitute the peripheral sector of the complex. [4Fe-4S] cluster serves as cofactor.

It localises to the cell inner membrane. The enzyme catalyses a quinone + NADH + 5 H(+)(in) = a quinol + NAD(+) + 4 H(+)(out). NDH-1 shuttles electrons from NADH, via FMN and iron-sulfur (Fe-S) centers, to quinones in the respiratory chain. The immediate electron acceptor for the enzyme in this species is believed to be ubiquinone. Couples the redox reaction to proton translocation (for every two electrons transferred, four hydrogen ions are translocated across the cytoplasmic membrane), and thus conserves the redox energy in a proton gradient. This is NADH-quinone oxidoreductase subunit B 2 from Anaeromyxobacter sp. (strain K).